Reading from the N-terminus, the 349-residue chain is Phosphoribosylformylglycinamidine cyclo-ligase (349 aa).

Belongs to the AIR synthase family.

The protein resides in the cytoplasm. The catalysed reaction is 2-formamido-N(1)-(5-O-phospho-beta-D-ribosyl)acetamidine + ATP = 5-amino-1-(5-phospho-beta-D-ribosyl)imidazole + ADP + phosphate + H(+). Its pathway is purine metabolism; IMP biosynthesis via de novo pathway; 5-amino-1-(5-phospho-D-ribosyl)imidazole from N(2)-formyl-N(1)-(5-phospho-D-ribosyl)glycinamide: step 2/2. The protein is Phosphoribosylformylglycinamidine cyclo-ligase of Methanococcus maripaludis (strain C6 / ATCC BAA-1332).